Here is a 74-residue protein sequence, read N- to C-terminus: Cytochrome c oxidase subunit 3 (74 aa).

A run of 2 helical transmembrane segments spans residues Ser-15 to His-37 and Ser-42 to Trp-59.

It belongs to the cytochrome c oxidase subunit 3 family. Component of the cytochrome c oxidase (complex IV, CIV), a multisubunit enzyme composed of a catalytic core of 3 subunits and several supernumerary subunits. The complex exists as a monomer or a dimer and forms supercomplexes (SCs) in the inner mitochondrial membrane with ubiquinol-cytochrome c oxidoreductase (cytochrome b-c1 complex, complex III, CIII).

Its subcellular location is the mitochondrion inner membrane. It catalyses the reaction 4 Fe(II)-[cytochrome c] + O2 + 8 H(+)(in) = 4 Fe(III)-[cytochrome c] + 2 H2O + 4 H(+)(out). Its function is as follows. Component of the cytochrome c oxidase, the last enzyme in the mitochondrial electron transport chain which drives oxidative phosphorylation. The respiratory chain contains 3 multisubunit complexes succinate dehydrogenase (complex II, CII), ubiquinol-cytochrome c oxidoreductase (cytochrome b-c1 complex, complex III, CIII) and cytochrome c oxidase (complex IV, CIV), that cooperate to transfer electrons derived from NADH and succinate to molecular oxygen, creating an electrochemical gradient over the inner membrane that drives transmembrane transport and the ATP synthase. Cytochrome c oxidase is the component of the respiratory chain that catalyzes the reduction of oxygen to water. Electrons originating from reduced cytochrome c in the intermembrane space (IMS) are transferred via the dinuclear copper A center (CU(A)) of subunit 2 and heme A of subunit 1 to the active site in subunit 1, a binuclear center (BNC) formed by heme A3 and copper B (CU(B)). The BNC reduces molecular oxygen to 2 water molecules using 4 electrons from cytochrome c in the IMS and 4 protons from the mitochondrial matrix. The sequence is that of Cytochrome c oxidase subunit 3 (mt:CoIII) from Drosophila simulans (Fruit fly).